Reading from the N-terminus, the 202-residue chain is Probable nicotinate-nucleotide adenylyltransferase (202 aa).

The protein belongs to the NadD family.

It carries out the reaction nicotinate beta-D-ribonucleotide + ATP + H(+) = deamido-NAD(+) + diphosphate. It participates in cofactor biosynthesis; NAD(+) biosynthesis; deamido-NAD(+) from nicotinate D-ribonucleotide: step 1/1. Its function is as follows. Catalyzes the reversible adenylation of nicotinate mononucleotide (NaMN) to nicotinic acid adenine dinucleotide (NaAD). The polypeptide is Probable nicotinate-nucleotide adenylyltransferase (Bacteroides thetaiotaomicron (strain ATCC 29148 / DSM 2079 / JCM 5827 / CCUG 10774 / NCTC 10582 / VPI-5482 / E50)).